The sequence spans 310 residues: GPN-loop GTPase 2 (310 aa).

An N-acetylalanine modification is found at A2. GTP is bound at residue G19 to T24. A Gly-Pro-Asn (GPN)-loop; involved in dimer interface motif is present at residues G76 to N78. S178 to D181 contributes to the GTP binding site.

Belongs to the GPN-loop GTPase family. As to quaternary structure, heterodimers with GPN1 or GPN3. Binds to RNA polymerase II (RNAPII).

In terms of biological role, small GTPase required for proper localization of RNA polymerase II and III (RNAPII and RNAPIII). May act at an RNAP assembly step prior to nuclear import. This chain is GPN-loop GTPase 2, found in Sus scrofa (Pig).